A 376-amino-acid polypeptide reads, in one-letter code: NIF3-like protein 1 (376 aa).

N6-acetyllysine is present on Lys-108. Positions 243-376 are mediates interaction with COPS2; it reads LLLHTGMGRL…ETDRDPLRVV (134 aa). A Phosphothreonine modification is found at Thr-254. Position 258 is a phosphoserine (Ser-258).

It belongs to the GTP cyclohydrolase I type 2/NIF3 family. As to quaternary structure, homodimer. Interacts with COPS2. Interacts with THOC7.

Its subcellular location is the cytoplasm. The protein localises to the nucleus. Its function is as follows. May function as a transcriptional corepressor through its interaction with COPS2, negatively regulating the expression of genes involved in neuronal differentiation. This chain is NIF3-like protein 1, found in Rattus norvegicus (Rat).